The following is a 124-amino-acid chain: Putative iron-sulfur cluster insertion protein ErpA (124 aa).

3 residues coordinate iron-sulfur cluster: Cys-52, Cys-116, and Cys-118.

It belongs to the HesB/IscA family. Homodimer. Requires iron-sulfur cluster as cofactor.

Required for insertion of 4Fe-4S clusters. The protein is Putative iron-sulfur cluster insertion protein ErpA of Delftia acidovorans (strain DSM 14801 / SPH-1).